The chain runs to 505 residues: ATP synthase subunit alpha (505 aa).

170 to 177 lines the ATP pocket; sequence GDRQTGKT.

This sequence belongs to the ATPase alpha/beta chains family. In terms of assembly, F-type ATPases have 2 components, CF(1) - the catalytic core - and CF(0) - the membrane proton channel. CF(1) has five subunits: alpha(3), beta(3), gamma(1), delta(1), epsilon(1). CF(0) has four main subunits: a(1), b(1), b'(1) and c(9-12).

It is found in the cellular thylakoid membrane. It carries out the reaction ATP + H2O + 4 H(+)(in) = ADP + phosphate + 5 H(+)(out). In terms of biological role, produces ATP from ADP in the presence of a proton gradient across the membrane. The alpha chain is a regulatory subunit. This Synechococcus sp. (strain RCC307) protein is ATP synthase subunit alpha.